Consider the following 547-residue polypeptide: Intercellular adhesion molecule 3 (547 aa).

The signal sequence occupies residues 1 to 29 (MATMVPSVLWPRACWTLLVCCLLTPGVQG). The Extracellular segment spans residues 30-485 (QEFLLRVEPQ…VMDIEAGSSH (456 aa)). The Ig-like C2-type 1 domain occupies 46–103 (GGSLFVNCSTDCPSSEKIALETSLSKELVASGMGWAAFNLSNVTGNSRILCSVYCNGS). N-linked (GlcNAc...) asparagine glycosylation is found at Asn52, Asn84, Asn87, Asn101, Asn110, and Asn134. Intrachain disulfides connect Cys53/Cys96 and Cys57/Cys100. The Ig-like C2-type 2 domain maps to 132-197 (GQNFTLRCQV…FSCRTELDMQ (66 aa)). A disulfide bridge links Cys139 with Cys190. 9 N-linked (GlcNAc...) asparagine glycosylation sites follow: Asn206, Asn264, Asn295, Asn308, Asn320, Asn363, Asn389, Asn453, and Asn457. One can recognise an Ig-like C2-type 3 domain in the interval 234–301 (ETSWPVDCTL…IVCNVTLGGE (68 aa)). The cysteines at positions 241 and 294 are disulfide-linked. One can recognise an Ig-like C2-type 4 domain in the interval 329-382 (GSTVTVSCMAGARVQVTLDGVPAAAPGQPAQLQLNATESDDRRSFFCSATLEVD). Cysteines 336 and 375 form a disulfide. One can recognise an Ig-like C2-type 5 domain in the interval 416 to 469 (KTTHVLQCQARGNPYPELRCLKEGSSREVPVGIPFFVNVTHNGTYQCQASSSRG). Cys423 and Cys462 are oxidised to a cystine. The chain crosses the membrane as a helical span at residues 486–510 (FVPVFVAVLLTLGVVTIVLALMYVF). Topologically, residues 511-547 (REHKRSGSYHVREESTYLPLTSMQPTQAMGEEPSRAE) are cytoplasmic.

This sequence belongs to the immunoglobulin superfamily. ICAM family. In terms of assembly, interacts with moesin/MSN. In terms of processing, upon stimulation by a physiologic stimuli becomes rapidly and transiently phosphorylated on serine residues. Leukocytes.

Its subcellular location is the membrane. Functionally, ICAM proteins are ligands for the leukocyte adhesion protein LFA-1 (integrin alpha-L/beta-2). ICAM3 is also a ligand for integrin alpha-D/beta-2. In association with integrin alpha-L/beta-2, contributes to apoptotic neutrophil phagocytosis by macrophages. In Pan troglodytes (Chimpanzee), this protein is Intercellular adhesion molecule 3 (ICAM3).